The chain runs to 741 residues: NAD(P)H-quinone oxidoreductase subunit 5, chloroplastic (741 aa).

Helical transmembrane passes span 9-29 (WIIPLLPLTVTMLIGLGLLLF), 40-60 (WAVPSVLFLSIGMLLSVELAI), 89-109 (IDPLTSIMSILITTVGILVLI), 125-145 (FSYLSFFNASMLGLVTSSNLI), 147-167 (IYIFWELVGMCSYLLIGFWFA), 185-205 (GDFGLLLGILGLYWITGSFEF), 219-239 (NGVNSLFATLCAFLLFLGAVA), 258-278 (TPISALIHAATMVAAGIFLVA), 280-300 (LLPLFIVIPYIMNLISLIGVI), 327-347 (LGYIMLAPGIGSYRTALFHLI), 396-416 (TTFFWGTLSLCGIPPLACFWS), 425-445 (WLYSPIFAIIAYATAGLTAFY), 547-567 (LLPLLLLGLFTWFVGLIGIPF), 606-626 (ILSVSISVFGIFTASLLYGSV), and 721-741 (SYIFYYSSYVLIFVLIFYFFI).

This sequence belongs to the complex I subunit 5 family. NDH is composed of at least 16 different subunits, 5 of which are encoded in the nucleus.

The protein resides in the plastid. It is found in the chloroplast thylakoid membrane. The enzyme catalyses a plastoquinone + NADH + (n+1) H(+)(in) = a plastoquinol + NAD(+) + n H(+)(out). The catalysed reaction is a plastoquinone + NADPH + (n+1) H(+)(in) = a plastoquinol + NADP(+) + n H(+)(out). Its function is as follows. NDH shuttles electrons from NAD(P)H:plastoquinone, via FMN and iron-sulfur (Fe-S) centers, to quinones in the photosynthetic chain and possibly in a chloroplast respiratory chain. The immediate electron acceptor for the enzyme in this species is believed to be plastoquinone. Couples the redox reaction to proton translocation, and thus conserves the redox energy in a proton gradient. The polypeptide is NAD(P)H-quinone oxidoreductase subunit 5, chloroplastic (ndhF) (Ceratophyllum demersum (Rigid hornwort)).